The chain runs to 362 residues: S-adenosylmethionine:tRNA ribosyltransferase-isomerase (362 aa).

It belongs to the QueA family. As to quaternary structure, monomer.

Its subcellular location is the cytoplasm. It carries out the reaction 7-aminomethyl-7-carbaguanosine(34) in tRNA + S-adenosyl-L-methionine = epoxyqueuosine(34) in tRNA + adenine + L-methionine + 2 H(+). It participates in tRNA modification; tRNA-queuosine biosynthesis. Its function is as follows. Transfers and isomerizes the ribose moiety from AdoMet to the 7-aminomethyl group of 7-deazaguanine (preQ1-tRNA) to give epoxyqueuosine (oQ-tRNA). The protein is S-adenosylmethionine:tRNA ribosyltransferase-isomerase of Deinococcus radiodurans (strain ATCC 13939 / DSM 20539 / JCM 16871 / CCUG 27074 / LMG 4051 / NBRC 15346 / NCIMB 9279 / VKM B-1422 / R1).